The sequence spans 285 residues: 4-diphosphocytidyl-2-C-methyl-D-erythritol kinase (285 aa).

Lys-12 is an active-site residue. ATP is bound at residue 94-104 (PAQAGMGGGSS). Asp-136 is an active-site residue.

It belongs to the GHMP kinase family. IspE subfamily.

It carries out the reaction 4-CDP-2-C-methyl-D-erythritol + ATP = 4-CDP-2-C-methyl-D-erythritol 2-phosphate + ADP + H(+). The protein operates within isoprenoid biosynthesis; isopentenyl diphosphate biosynthesis via DXP pathway; isopentenyl diphosphate from 1-deoxy-D-xylulose 5-phosphate: step 3/6. Functionally, catalyzes the phosphorylation of the position 2 hydroxy group of 4-diphosphocytidyl-2C-methyl-D-erythritol. This is 4-diphosphocytidyl-2-C-methyl-D-erythritol kinase from Paracidovorax citrulli (strain AAC00-1) (Acidovorax citrulli).